We begin with the raw amino-acid sequence, 112 residues long: Nucleoid-associated protein FTM_1023 (112 aa).

This sequence belongs to the YbaB/EbfC family. Homodimer.

The protein resides in the cytoplasm. The protein localises to the nucleoid. Functionally, binds to DNA and alters its conformation. May be involved in regulation of gene expression, nucleoid organization and DNA protection. The polypeptide is Nucleoid-associated protein FTM_1023 (Francisella tularensis subsp. mediasiatica (strain FSC147)).